Here is a 172-residue protein sequence, read N- to C-terminus: NADH-quinone oxidoreductase subunit B (172 aa).

C42, C43, C107, and C136 together coordinate [4Fe-4S] cluster.

The protein belongs to the complex I 20 kDa subunit family. As to quaternary structure, NDH-1 is composed of 14 different subunits. Subunits NuoB, C, D, E, F, and G constitute the peripheral sector of the complex. [4Fe-4S] cluster serves as cofactor.

Its subcellular location is the cell inner membrane. The catalysed reaction is a quinone + NADH + 5 H(+)(in) = a quinol + NAD(+) + 4 H(+)(out). Its function is as follows. NDH-1 shuttles electrons from NADH, via FMN and iron-sulfur (Fe-S) centers, to quinones in the respiratory chain. The immediate electron acceptor for the enzyme in this species is believed to be ubiquinone. Couples the redox reaction to proton translocation (for every two electrons transferred, four hydrogen ions are translocated across the cytoplasmic membrane), and thus conserves the redox energy in a proton gradient. The polypeptide is NADH-quinone oxidoreductase subunit B (Sulfurovum sp. (strain NBC37-1)).